We begin with the raw amino-acid sequence, 99 residues long: Large ribosomal subunit protein uL23 (99 aa).

Belongs to the universal ribosomal protein uL23 family. In terms of assembly, part of the 50S ribosomal subunit. Contacts protein L29, and trigger factor when it is bound to the ribosome.

In terms of biological role, one of the early assembly proteins it binds 23S rRNA. One of the proteins that surrounds the polypeptide exit tunnel on the outside of the ribosome. Forms the main docking site for trigger factor binding to the ribosome. This Stenotrophomonas maltophilia (strain R551-3) protein is Large ribosomal subunit protein uL23.